The primary structure comprises 145 residues: D-aminoacyl-tRNA deacylase (145 aa).

The short motif at 137–138 (GP) is the Gly-cisPro motif, important for rejection of L-amino acids element.

Belongs to the DTD family. As to quaternary structure, homodimer.

Its subcellular location is the cytoplasm. It carries out the reaction glycyl-tRNA(Ala) + H2O = tRNA(Ala) + glycine + H(+). The catalysed reaction is a D-aminoacyl-tRNA + H2O = a tRNA + a D-alpha-amino acid + H(+). An aminoacyl-tRNA editing enzyme that deacylates mischarged D-aminoacyl-tRNAs. Also deacylates mischarged glycyl-tRNA(Ala), protecting cells against glycine mischarging by AlaRS. Acts via tRNA-based rather than protein-based catalysis; rejects L-amino acids rather than detecting D-amino acids in the active site. By recycling D-aminoacyl-tRNA to D-amino acids and free tRNA molecules, this enzyme counteracts the toxicity associated with the formation of D-aminoacyl-tRNA entities in vivo and helps enforce protein L-homochirality. The sequence is that of D-aminoacyl-tRNA deacylase from Enterobacter sp. (strain 638).